The following is a 155-amino-acid chain: Pathogenesis-related protein 2 (155 aa).

It belongs to the BetVI family.

The sequence is that of Pathogenesis-related protein 2 from Phaseolus vulgaris (Kidney bean).